Consider the following 251-residue polypeptide: tRNA1(Val) (adenine(37)-N6)-methyltransferase (251 aa).

It belongs to the methyltransferase superfamily. tRNA (adenine-N(6)-)-methyltransferase family.

It localises to the cytoplasm. It catalyses the reaction adenosine(37) in tRNA1(Val) + S-adenosyl-L-methionine = N(6)-methyladenosine(37) in tRNA1(Val) + S-adenosyl-L-homocysteine + H(+). In terms of biological role, specifically methylates the adenine in position 37 of tRNA(1)(Val) (anticodon cmo5UAC). This Shewanella frigidimarina (strain NCIMB 400) protein is tRNA1(Val) (adenine(37)-N6)-methyltransferase.